A 159-amino-acid chain; its full sequence is RNA pyrophosphohydrolase (159 aa).

Positions 6-149 (GFRPNVGIIL…KREVYRRALK (144 aa)) constitute a Nudix hydrolase domain. A Nudix box motif is present at residues 38–59 (GGINPDETPEDALYRELNEEVG).

It belongs to the Nudix hydrolase family. RppH subfamily. Requires a divalent metal cation as cofactor.

Its function is as follows. Accelerates the degradation of transcripts by removing pyrophosphate from the 5'-end of triphosphorylated RNA, leading to a more labile monophosphorylated state that can stimulate subsequent ribonuclease cleavage. The chain is RNA pyrophosphohydrolase from Pseudomonas entomophila (strain L48).